The primary structure comprises 118 residues: Small ribosomal subunit protein uS13 (118 aa).

A disordered region spans residues 93 to 118 (RGLPVRGQRTKTNARTRKGPRKPIRK).

It belongs to the universal ribosomal protein uS13 family. As to quaternary structure, part of the 30S ribosomal subunit. Forms a loose heterodimer with protein S19. Forms two bridges to the 50S subunit in the 70S ribosome.

Its function is as follows. Located at the top of the head of the 30S subunit, it contacts several helices of the 16S rRNA. In the 70S ribosome it contacts the 23S rRNA (bridge B1a) and protein L5 of the 50S subunit (bridge B1b), connecting the 2 subunits; these bridges are implicated in subunit movement. Contacts the tRNAs in the A and P-sites. In Pseudomonas fluorescens (strain Pf0-1), this protein is Small ribosomal subunit protein uS13.